We begin with the raw amino-acid sequence, 1032 residues long: Connector enhancer of kinase suppressor of ras 2 (1032 aa).

In terms of domain architecture, SAM spans 11–76 (WSPSQVVDWM…LEAVDLLCAL (66 aa)). Position 12 is a phosphoserine (S12). Residues 84 to 178 (NLKTLSHKLN…TIVQQDCTVY (95 aa)) enclose the CRIC domain. The 83-residue stretch at 215 to 297 (VIQLANIKPS…GVILTLKKRP (83 aa)) folds into the PDZ domain. Residues 324 to 340 (RSPTSSVATPSSTISTP) are compositionally biased toward low complexity. Residues 324–349 (RSPTSSVATPSSTISTPTKRDSSALQ) form a disordered region. The 184-residue stretch at 332 to 515 (TPSSTISTPT…PTHYSLLPSL (184 aa)) folds into the DUF1170 domain. 2 positions are modified to phosphoserine: S338 and S390. The disordered stretch occupies residues 480–509 (EEYMFQRNSKKDTGKKSKKKGDKSTSPTHY). The region spanning 570 to 669 (RGDCEGWLWK…WLNRINMLTA (100 aa)) is the PH domain. The tract at residues 682–766 (DYWSESDKEE…PIRKTASQRR (85 aa)) is disordered. A Phosphotyrosine modification is found at Y683. The span at 683 to 693 (YWSESDKEEAD) shows a compositional bias: acidic residues. S685 and S687 each carry phosphoserine. A compositionally biased stretch (pro residues) spans 701 to 714 (DSPPPPYDTYPRPP). Low complexity predominate over residues 730-740 (LSSTETSQSQS). A phosphoserine mark is found at S756 and S767. Residues 866–900 (DPQDDIQPPEVEEEEEEEEEEAAGENIGEKNENRE) form a disordered region. Residues 874-917 (PEVEEEEEEEEEEAAGENIGEKNENREEKLGDSLQDLYRALEEA) adopt a coiled-coil conformation. Acidic residues predominate over residues 875-888 (EVEEEEEEEEEEAA). S906 carries the post-translational modification Phosphoserine.

This sequence belongs to the CNKSR family. As to quaternary structure, interacts with RAF1, RAB2L and RAL GTPase proteins. Interacts with DLG4 and AIP1. Post-translationally, phosphorylated on tyrosine. As to expression, expressed in neurons and localized in the cell body and neurites.

Its subcellular location is the cytoplasm. It is found in the membrane. Functionally, may function as an adapter protein or regulator of Ras signaling pathways, in synaptic junctions. The protein is Connector enhancer of kinase suppressor of ras 2 (Cnksr2) of Rattus norvegicus (Rat).